Reading from the N-terminus, the 198-residue chain is Na(+)-translocating NADH-quinone reductase subunit E (198 aa).

6 consecutive transmembrane segments (helical) span residues 11–31 (SIFI…FLAV), 39–59 (FGLG…NNLV), 77–97 (FLNF…LEMI), 110–130 (GIFL…SFMV), 140–160 (VVYG…LAGI), and 176–196 (LGIT…FSGV).

This sequence belongs to the NqrDE/RnfAE family. As to quaternary structure, composed of six subunits; NqrA, NqrB, NqrC, NqrD, NqrE and NqrF.

The protein localises to the cell inner membrane. The enzyme catalyses a ubiquinone + n Na(+)(in) + NADH + H(+) = a ubiquinol + n Na(+)(out) + NAD(+). Functionally, NQR complex catalyzes the reduction of ubiquinone-1 to ubiquinol by two successive reactions, coupled with the transport of Na(+) ions from the cytoplasm to the periplasm. NqrA to NqrE are probably involved in the second step, the conversion of ubisemiquinone to ubiquinol. The protein is Na(+)-translocating NADH-quinone reductase subunit E of Vibrio anguillarum (Listonella anguillarum).